A 466-amino-acid polypeptide reads, in one-letter code: Soluble pyridine nucleotide transhydrogenase (466 aa).

Residue Glu-36 to Cys-45 participates in FAD binding.

Belongs to the class-I pyridine nucleotide-disulfide oxidoreductase family. FAD is required as a cofactor.

It is found in the cytoplasm. It catalyses the reaction NAD(+) + NADPH = NADH + NADP(+). Functionally, conversion of NADPH, generated by peripheral catabolic pathways, to NADH, which can enter the respiratory chain for energy generation. In Enterobacter sp. (strain 638), this protein is Soluble pyridine nucleotide transhydrogenase.